A 487-amino-acid polypeptide reads, in one-letter code: Wax ester synthase/diacylglycerol acyltransferase 3 (487 aa).

Over 1 to 193 (MYTMKKGKDM…KHASSNKKSW (193 aa)) the chain is Cytoplasmic. His-151 acts as the Proton acceptor in catalysis. Residues 194 to 214 (WLVGRFWFMIRIIFTTVVELF) traverse the membrane as a helical segment. Topologically, residues 215 to 487 (KYLLTLCFMR…MEKGVHKMEV (273 aa)) are lumenal.

In the N-terminal section; belongs to the long-chain O-acyltransferase family. As to expression, mostly expressed in flowers and siliques.

The protein resides in the cell membrane. It is found in the endoplasmic reticulum membrane. The catalysed reaction is an acyl-CoA + a 1,2-diacyl-sn-glycerol = a triacyl-sn-glycerol + CoA. It carries out the reaction a long chain fatty alcohol + a fatty acyl-CoA = a wax ester + CoA. Its pathway is glycerolipid metabolism; triacylglycerol biosynthesis. It functions in the pathway lipid metabolism. Its function is as follows. Bifunctional wax ester synthase/diacylglycerol acyltransferase. Involved in cuticular wax biosynthesis. The protein is Wax ester synthase/diacylglycerol acyltransferase 3 of Arabidopsis thaliana (Mouse-ear cress).